The sequence spans 151 residues: Chaperonin GroEL (151 aa).

Residue 41–45 (DGTTT) participates in ATP binding.

The protein belongs to the chaperonin (HSP60) family. In terms of assembly, forms a cylinder of 14 subunits composed of two heptameric rings stacked back-to-back. Interacts with the co-chaperonin GroES.

The protein localises to the cytoplasm. The catalysed reaction is ATP + H2O + a folded polypeptide = ADP + phosphate + an unfolded polypeptide.. Its function is as follows. Together with its co-chaperonin GroES, plays an essential role in assisting protein folding. The GroEL-GroES system forms a nano-cage that allows encapsulation of the non-native substrate proteins and provides a physical environment optimized to promote and accelerate protein folding. The sequence is that of Chaperonin GroEL from Mycobacterium marinum.